A 591-amino-acid chain; its full sequence is Aspartate--tRNA ligase (591 aa).

Glutamate 174 contributes to the L-aspartate binding site. The aspartate stretch occupies residues 198–201 (QLFK). An L-aspartate-binding site is contributed by arginine 220. ATP-binding positions include 220–222 (RDE) and glutamine 229. Residue histidine 450 participates in L-aspartate binding. Glutamate 486 contacts ATP. Residue arginine 493 coordinates L-aspartate. Residue 538-541 (GLDR) coordinates ATP.

It belongs to the class-II aminoacyl-tRNA synthetase family. Type 1 subfamily. Homodimer.

The protein resides in the cytoplasm. The catalysed reaction is tRNA(Asp) + L-aspartate + ATP = L-aspartyl-tRNA(Asp) + AMP + diphosphate. Functionally, catalyzes the attachment of L-aspartate to tRNA(Asp) in a two-step reaction: L-aspartate is first activated by ATP to form Asp-AMP and then transferred to the acceptor end of tRNA(Asp). This chain is Aspartate--tRNA ligase, found in Leuconostoc mesenteroides subsp. mesenteroides (strain ATCC 8293 / DSM 20343 / BCRC 11652 / CCM 1803 / JCM 6124 / NCDO 523 / NBRC 100496 / NCIMB 8023 / NCTC 12954 / NRRL B-1118 / 37Y).